We begin with the raw amino-acid sequence, 177 residues long: Transcription antitermination protein NusB (177 aa).

The tract at residues 1-35 (MTDSANPTPSARPPRQPRTGTTGTGARKAGSKSGR) is disordered. The segment covering 17–28 (PRTGTTGTGARK) has biased composition (low complexity).

This sequence belongs to the NusB family.

In terms of biological role, involved in transcription antitermination. Required for transcription of ribosomal RNA (rRNA) genes. Binds specifically to the boxA antiterminator sequence of the ribosomal RNA (rrn) operons. This Acidovorax ebreus (strain TPSY) (Diaphorobacter sp. (strain TPSY)) protein is Transcription antitermination protein NusB.